Reading from the N-terminus, the 454-residue chain is Phosphoglucosamine mutase (454 aa).

Catalysis depends on S102, which acts as the Phosphoserine intermediate. Positions 102, 247, 249, and 251 each coordinate Mg(2+). The residue at position 102 (S102) is a Phosphoserine.

This sequence belongs to the phosphohexose mutase family. Mg(2+) is required as a cofactor. In terms of processing, activated by phosphorylation.

The enzyme catalyses alpha-D-glucosamine 1-phosphate = D-glucosamine 6-phosphate. In terms of biological role, catalyzes the conversion of glucosamine-6-phosphate to glucosamine-1-phosphate. This chain is Phosphoglucosamine mutase, found in Kineococcus radiotolerans (strain ATCC BAA-149 / DSM 14245 / SRS30216).